Here is a 350-residue protein sequence, read N- to C-terminus: Phenylalanine--tRNA ligase alpha subunit (350 aa).

Glu260 lines the Mg(2+) pocket.

It belongs to the class-II aminoacyl-tRNA synthetase family. Phe-tRNA synthetase alpha subunit type 1 subfamily. In terms of assembly, tetramer of two alpha and two beta subunits. Requires Mg(2+) as cofactor.

The protein resides in the cytoplasm. The catalysed reaction is tRNA(Phe) + L-phenylalanine + ATP = L-phenylalanyl-tRNA(Phe) + AMP + diphosphate + H(+). The chain is Phenylalanine--tRNA ligase alpha subunit from Mycoplasma capricolum subsp. capricolum (strain California kid / ATCC 27343 / NCTC 10154).